A 369-amino-acid polypeptide reads, in one-letter code: UDP-N-acetyl-3-dehydro-alpha-D-glucosamine 3-aminotranferase (369 aa).

The residue at position 190 (Lys190) is an N6-(pyridoxal phosphate)lysine.

It belongs to the DegT/DnrJ/EryC1 family. Requires pyridoxal 5'-phosphate as cofactor.

It carries out the reaction UDP-2-acetamido-3-amino-2,3-dideoxy-alpha-D-glucopyranose + 2-oxoglutarate = UDP-2-acetamido-3-dehydro-2-deoxy-alpha-D-glucopyranose + L-glutamate. Its pathway is bacterial outer membrane biogenesis; LPS lipid A biosynthesis. In terms of biological role, aminotranferase involved in the synthesis of 2,3-diamino-2,3-dideoxy-D-glucopyranose (GlcN3N), which is a component of lipid A in some species. Catalyzes the amination of UDP-2-acetamido-3-dehydro-2-deoxy-alpha-D-glucopyranose (UDP-3-oxo-GlcNAc) to UDP-2-acetamido-3-amino-2,3-dideoxy-alpha-D-glucopyranose (UDP-GlcNAc3N), using L-glutamate as the amine donor. Other amine donors, such as alanine and glutamine, can substitute for glutamate, but product formation is slower. The chain is UDP-N-acetyl-3-dehydro-alpha-D-glucosamine 3-aminotranferase from Acidithiobacillus ferrooxidans (strain ATCC 23270 / DSM 14882 / CIP 104768 / NCIMB 8455) (Ferrobacillus ferrooxidans (strain ATCC 23270)).